We begin with the raw amino-acid sequence, 320 residues long: Cytochrome f (320 aa).

Positions 1-35 are cleaved as a signal peptide; the sequence is MHTKNLFYSRTQQITQYLSALLMMVILTRTSISSA. The heme site is built by Y36, C56, C59, and H60. A helical transmembrane segment spans residues 286–306; sequence VQVLLFFFASIILAQIFLVLK.

The protein belongs to the cytochrome f family. The 4 large subunits of the cytochrome b6-f complex are cytochrome b6, subunit IV (17 kDa polypeptide, petD), cytochrome f and the Rieske protein, while the 4 small subunits are PetG, PetL, PetM and PetN. The complex functions as a dimer. It depends on heme as a cofactor.

Its subcellular location is the plastid thylakoid membrane. Component of the cytochrome b6-f complex, which mediates electron transfer between photosystem II (PSII) and photosystem I (PSI), cyclic electron flow around PSI, and state transitions. The sequence is that of Cytochrome f from Cuscuta gronovii (Common dodder).